The following is a 366-amino-acid chain: MTNHAGFAADDAVTAAVPVQAAQGGRHFPPFLAPSSRLTDCKKAAAHVDLAGAGGVATVPGSWPRHAKPVSGAELDDWMEKHPSALAWFESVAAAAKGKEIVVFLDYDGTLSPIVADPDRAFMSDEMREAVRGVAKHFPTAIVSGRCIDKVFDFVKLEELYYAGSHGMDIRGPTAAASEYNHNMKAKQGDAVTFQPAADFLPVIEEVYHVLKERMASIRGSLVENNKFCLSVHYRCVDEAEWGVLDGKVRAVIEGYPDLRLSKGRKVLEIRPVIDWDKGSALQFLLKSLGYEGRNNVFPIYIGDDRTDEDAFKVLRNMGQGIGILVTKVPKETAASYTLREPSEVKEFLRKLVKIKINGDKGLIGK.

Belongs to the trehalose phosphatase family. A divalent metal cation is required as a cofactor.

It carries out the reaction alpha,alpha-trehalose 6-phosphate + H2O = alpha,alpha-trehalose + phosphate. It functions in the pathway glycan biosynthesis; trehalose biosynthesis. Functionally, removes the phosphate from trehalose 6-phosphate to produce free trehalose. Trehalose accumulation in plant may improve abiotic stress tolerance. This chain is Probable trehalose-phosphate phosphatase 3 (TPP3), found in Oryza sativa subsp. japonica (Rice).